The chain runs to 375 residues: DNA replication and repair protein RecF (375 aa).

30–37 contacts ATP; the sequence is GENAQGKT.

This sequence belongs to the RecF family.

The protein resides in the cytoplasm. Functionally, the RecF protein is involved in DNA metabolism; it is required for DNA replication and normal SOS inducibility. RecF binds preferentially to single-stranded, linear DNA. It also seems to bind ATP. In Bacillus anthracis (strain A0248), this protein is DNA replication and repair protein RecF.